Reading from the N-terminus, the 282-residue chain is MTEFTTLLQQGNAWFFIPSAILLGALHGLEPGHSKTMMAAFIIAIKGTIKQAVMLGLAATISHTAVVWLIAFGGMVISKRFTAQSAEPWLQLISAVIIIGTAFWMFWRTWRGERNWLENMHGHDYEHHHHHHDHEHHQDHEHHHDQGHHHHHEHGEYQDAHARAHANDIKRRFDGREVINWQILLFGLTGGFIPCPAAITVLLICIQLKALTLGATLVVSFSIGLALTLVTVGVGAAISVQQVAKRWSGFNTLAKRAPYFSSLLIGLVGVYMGVHGFMGIMR.

At 1–12 (MTEFTTLLQQGN) the chain is on the periplasmic side. A helical transmembrane segment spans residues 13–33 (AWFFIPSAILLGALHGLEPGH). Residues 34 to 56 (SKTMMAAFIIAIKGTIKQAVMLG) are Cytoplasmic-facing. The chain crosses the membrane as a helical span at residues 57–77 (LAATISHTAVVWLIAFGGMVI). Over 78 to 86 (SKRFTAQSA) the chain is Periplasmic. A helical membrane pass occupies residues 87 to 107 (EPWLQLISAVIIIGTAFWMFW). The Cytoplasmic portion of the chain corresponds to 108–182 (RTWRGERNWL…FDGREVINWQ (75 aa)). A disordered region spans residues 127 to 161 (HHHHHHDHEHHQDHEHHHDQGHHHHHEHGEYQDAH). Basic and acidic residues predominate over residues 135–144 (EHHQDHEHHH). Residues 183 to 203 (ILLFGLTGGFIPCPAAITVLL) form a helical membrane-spanning segment. The Periplasmic segment spans residues 204–217 (ICIQLKALTLGATL). Residues 218–238 (VVSFSIGLALTLVTVGVGAAI) form a helical membrane-spanning segment. At 239-259 (SVQQVAKRWSGFNTLAKRAPY) the chain is on the cytoplasmic side. Residues 260-280 (FSSLLIGLVGVYMGVHGFMGI) form a helical membrane-spanning segment. Residues 281–282 (MR) lie on the Periplasmic side of the membrane.

It belongs to the NiCoT transporter (TC 2.A.52) family. RcnA subfamily.

The protein localises to the cell inner membrane. Efflux system for nickel and cobalt. The sequence is that of Nickel/cobalt efflux system RcnA (rcnA) from Shigella flexneri serotype 5b (strain 8401).